A 118-amino-acid polypeptide reads, in one-letter code: Small ribosomal subunit protein uS17 (118 aa).

It belongs to the universal ribosomal protein uS17 family. Part of the 30S ribosomal subunit.

Functionally, one of the primary rRNA binding proteins, it binds specifically to the 5'-end of 16S ribosomal RNA. This is Small ribosomal subunit protein uS17 from Methanopyrus kandleri (strain AV19 / DSM 6324 / JCM 9639 / NBRC 100938).